The sequence spans 520 residues: 2-isopropylmalate synthase (520 aa).

Positions Ile-12–Val-274 constitute a Pyruvate carboxyltransferase domain. Mn(2+)-binding residues include Asp-21, His-209, His-211, and Asn-245. The segment at Arg-396–Ala-520 is regulatory domain.

Belongs to the alpha-IPM synthase/homocitrate synthase family. LeuA type 1 subfamily. As to quaternary structure, homodimer. Mn(2+) serves as cofactor.

It localises to the cytoplasm. It carries out the reaction 3-methyl-2-oxobutanoate + acetyl-CoA + H2O = (2S)-2-isopropylmalate + CoA + H(+). It participates in amino-acid biosynthesis; L-leucine biosynthesis; L-leucine from 3-methyl-2-oxobutanoate: step 1/4. Catalyzes the condensation of the acetyl group of acetyl-CoA with 3-methyl-2-oxobutanoate (2-ketoisovalerate) to form 3-carboxy-3-hydroxy-4-methylpentanoate (2-isopropylmalate). In Xanthomonas euvesicatoria pv. vesicatoria (strain 85-10) (Xanthomonas campestris pv. vesicatoria), this protein is 2-isopropylmalate synthase.